Reading from the N-terminus, the 313-residue chain is Probable cell division protein WhiA (313 aa).

The segment at residues 275–308 is a DNA-binding region (H-T-H motif); it reads SLRELGELAQPPLSKSCVNHRLRKLEQIAEHILA.

It belongs to the WhiA family.

In terms of biological role, involved in cell division and chromosome segregation. This chain is Probable cell division protein WhiA, found in Desulforudis audaxviator (strain MP104C).